A 335-amino-acid polypeptide reads, in one-letter code: Glyceraldehyde-3-phosphate dehydrogenase 2 (335 aa).

Residues 13–14 and glycine 111 contribute to the NAD(+) site; that span reads TI. 140 to 142 serves as a coordination point for D-glyceraldehyde 3-phosphate; sequence SCN. The active-site Nucleophile is cysteine 141. Arginine 169 serves as a coordination point for NAD(+). Residues threonine 171 and 195–196 each bind D-glyceraldehyde 3-phosphate; that span reads HG. An NAD(+)-binding site is contributed by glutamine 300.

This sequence belongs to the glyceraldehyde-3-phosphate dehydrogenase family. As to quaternary structure, homotetramer.

Its subcellular location is the cytoplasm. It carries out the reaction D-glyceraldehyde 3-phosphate + phosphate + NADP(+) = (2R)-3-phospho-glyceroyl phosphate + NADPH + H(+). The catalysed reaction is D-glyceraldehyde 3-phosphate + phosphate + NAD(+) = (2R)-3-phospho-glyceroyl phosphate + NADH + H(+). It functions in the pathway carbohydrate degradation; glycolysis; pyruvate from D-glyceraldehyde 3-phosphate: step 1/5. The sequence is that of Glyceraldehyde-3-phosphate dehydrogenase 2 (gapB) from Methanosarcina acetivorans (strain ATCC 35395 / DSM 2834 / JCM 12185 / C2A).